Reading from the N-terminus, the 854-residue chain is Protein ROOT HAIR DEFECTIVE 3 homolog 1 (854 aa).

At 1-680 (MDEAAAAEAV…QAHKRGNGRL (680 aa)) the chain is on the cytoplasmic side. One can recognise a GB1/RHD3-type G domain in the interval 37 to 252 (GLSYAVVSIM…IAPGGLAGDR (216 aa)). 47-54 (GPQSSGKS) is a binding site for GTP. The stretch at 217 to 242 (ALPSFEEKEEQFREQVQQLRQRFSNS) forms a coiled coil. Residues 681-701 (PPPWAMVAIAVLGFNEIMTLL) form a helical membrane-spanning segment. Topologically, residues 702 to 704 (RNP) are lumenal. The helical transmembrane segment at 705–725 (IYLFLLFVGYLLVKALAVQLD) threads the bilayer. Residues 726–854 (INREFQNGVV…NESNNAYSIV (129 aa)) lie on the Cytoplasmic side of the membrane. 2 stretches are compositionally biased toward low complexity: residues 758 to 781 (TEQQ…QQQP) and 814 to 828 (VSPS…VTSP). A disordered region spans residues 758 to 854 (TEQQQQQGHH…NESNNAYSIV (97 aa)). Polar residues predominate over residues 842-854 (QPDNESNNAYSIV).

The protein belongs to the TRAFAC class dynamin-like GTPase superfamily. GB1/RHD3 GTPase family. RHD3 subfamily.

It localises to the endoplasmic reticulum membrane. Probable GTP-binding protein that may be involved in cell development. The polypeptide is Protein ROOT HAIR DEFECTIVE 3 homolog 1 (Oryza sativa subsp. japonica (Rice)).